Reading from the N-terminus, the 307-residue chain is 4-hydroxybenzoate octaprenyltransferase (307 aa).

The next 9 helical transmembrane spans lie at 19–39 (PVGI…AAMG), 48–68 (VTAG…AILM), 105–125 (AIAA…FLPI), 127–147 (VFYW…MKRY), 150–170 (LPQV…YVAI), 172–192 (GAAD…TVAY), 221–241 (VIII…VMWH), 243–263 (FVPT…AMMF), and 282–302 (FLAN…ACVW).

This sequence belongs to the UbiA prenyltransferase family. Mg(2+) is required as a cofactor.

The protein localises to the cell inner membrane. The enzyme catalyses all-trans-octaprenyl diphosphate + 4-hydroxybenzoate = 4-hydroxy-3-(all-trans-octaprenyl)benzoate + diphosphate. It functions in the pathway cofactor biosynthesis; ubiquinone biosynthesis. Functionally, catalyzes the prenylation of para-hydroxybenzoate (PHB) with an all-trans polyprenyl group. Mediates the second step in the final reaction sequence of ubiquinone-8 (UQ-8) biosynthesis, which is the condensation of the polyisoprenoid side chain with PHB, generating the first membrane-bound Q intermediate 3-octaprenyl-4-hydroxybenzoate. This chain is 4-hydroxybenzoate octaprenyltransferase, found in Psychrobacter arcticus (strain DSM 17307 / VKM B-2377 / 273-4).